We begin with the raw amino-acid sequence, 146 residues long: Gonadotropin subunit beta-2 (146 aa).

An N-terminal signal peptide occupies residues T1–Q28. Cystine bridges form between C35–C83, C49–C98, C52–C136, C60–C114, C64–C116, and C119–C126. An N-linked (GlcNAc...) asparagine glycan is attached at N39.

It belongs to the glycoprotein hormones subunit beta family. Heterodimer of an alpha and a beta chain.

It is found in the secreted. Its function is as follows. Involved in gametogenesis and steroidogenesis. This chain is Gonadotropin subunit beta-2 (cgbb), found in Ctenopharyngodon idella (Grass carp).